The chain runs to 244 residues: ATP synthase subunit O, mitochondrial (244 aa).

The N-terminal 45 residues, 1-45 (MAMTGRARSMGFSILQKALSSAQRSNAHRSILCPTLSNSELLRNY), are a transit peptide targeting the mitochondrion.

This sequence belongs to the ATPase delta chain family. As to quaternary structure, F-type ATPases have 2 components, CF(1) - the catalytic core - and CF(0) - the membrane proton channel. CF(1) has five subunits: alpha(3), beta(3), gamma(1), delta(1), epsilon(1). CF(0) has three main subunits: a, b and c.

Its subcellular location is the mitochondrion. The protein resides in the mitochondrion inner membrane. Functionally, mitochondrial membrane ATP synthase (F(1)F(0) ATP synthase or Complex V) produces ATP from ADP in the presence of a proton gradient across the membrane which is generated by electron transport complexes of the respiratory chain. F-type ATPases consist of two structural domains, F(1) - containing the extramembraneous catalytic core and F(0) - containing the membrane proton channel, linked together by a central stalk and a peripheral stalk. During catalysis, ATP synthesis in the catalytic domain of F(1) is coupled via a rotary mechanism of the central stalk subunits to proton translocation. Part of the complex F(0) domain and the peripheric stalk, which acts as a stator to hold the catalytic alpha(3)beta(3) subcomplex and subunit a/ATP6 static relative to the rotary elements. The protein is ATP synthase subunit O, mitochondrial of Ipomoea batatas (Sweet potato).